The sequence spans 85 residues: MAHKKAGGSTRNGRDSESKRLGVKRFGGQTVLAGNILVRQRGTQFHPGLNVGCGKDHTLFATSDGTVVFETKGPKNRKYVSVVQA.

Positions 1–23 (MAHKKAGGSTRNGRDSESKRLGV) are disordered.

The protein belongs to the bacterial ribosomal protein bL27 family.

This is Large ribosomal subunit protein bL27 from Thioalkalivibrio sulfidiphilus (strain HL-EbGR7).